Reading from the N-terminus, the 256-residue chain is Calsenilin (256 aa).

Residues 1-22 (MQRTKEAVKASDGNLLGDPGRI) are disordered. A Glycyl lysine isopeptide (Lys-Gly) (interchain with G-Cter in SUMO1) cross-link involves residue lysine 26. 2 S-palmitoyl cysteine lipidation sites follow: cysteine 45 and cysteine 46. Serine 60 and serine 63 each carry phosphoserine. In terms of domain architecture, EF-hand 1; degenerate spans 67-123 (LELSTVRHQPEGLDQLQAQTKFTKKELQSLYRGFKNECPTGLVDEDTFKLIYSQFFP). Residue lysine 90 forms a Glycyl lysine isopeptide (Lys-Gly) (interchain with G-Cter in SUMO1) linkage. EF-hand domains lie at 126-161 (DATTYAHFLFNAFDADGNGAIHFEDFVVGLSILLRG), 162-197 (TVHEKLKWAFNLYDINKDGCITKEEMLAIMKSIYDM), and 210-245 (APLEHVERFFQKMDRNQDGVVTIDEFLETCQKDENI). Aspartate 175, asparagine 177, aspartate 179, cysteine 181, glutamate 186, aspartate 223, asparagine 225, aspartate 227, and glutamate 234 together coordinate Ca(2+). The interaction with KCND2 stretch occupies residues 243–256 (ENIMNSMQLFENVI).

It belongs to the recoverin family. In terms of assembly, binds to DNA as a homomultimer. Dimerization is induced by binding to calcium. Interacts with the C-terminus of PSEN1 and PSEN2 and with PSEN2 CTF subunit. Associates with KCN1. Component of heteromultimeric potassium channels. Identified in potassium channel complexes containing KCND1, KCND2, KCND3, KCNIP1, KCNIP2, KCNIP3, KCNIP4, DPP6 and DPP10. Interacts with KCND2 and KCND3. Palmitoylated. Palmitoylation enhances association with the plasma membrane. Post-translationally, proteolytically cleaved by caspase-3. Highly expressed in brain. Isoform 1 or isoform 4 (T+ forms) are expressed at equal levels with isoform 2 or isoform 3 (T- forms). Primarily detected in the layer V and deep layer VI of the cerebral cortex, the hippocampus, and the entire cerebellum. Expressed at low levels in testis. Also expressed in heart.

It localises to the cytoplasm. It is found in the cell membrane. The protein resides in the endoplasmic reticulum. The protein localises to the golgi apparatus. Its subcellular location is the nucleus. Functionally, calcium-dependent transcriptional repressor that binds to the DRE element of genes including PDYN and FOS. Affinity for DNA is reduced upon binding to calcium and enhanced by binding to magnesium. Seems to be involved in nociception. In terms of biological role, regulatory subunit of Kv4/D (Shal)-type voltage-gated rapidly inactivating A-type potassium channels, such as KCND2/Kv4.2 and KCND3/Kv4.3. Modulates channel expression at the cell membrane, gating characteristics, inactivation kinetics and rate of recovery from inactivation in a calcium-dependent and isoform-specific manner. May play a role in the regulation of PSEN2 proteolytic processing and apoptosis. Together with PSEN2 involved in modulation of amyloid-beta formation. This chain is Calsenilin (Kcnip3), found in Mus musculus (Mouse).